The chain runs to 394 residues: 1-deoxy-D-xylulose 5-phosphate reductoisomerase (394 aa).

7 residues coordinate NADPH: threonine 14, glycine 15, serine 16, isoleucine 17, glycine 40, asparagine 43, and asparagine 130. Residue lysine 131 participates in 1-deoxy-D-xylulose 5-phosphate binding. Glutamate 132 contacts NADPH. Aspartate 154 provides a ligand contact to Mn(2+). 1-deoxy-D-xylulose 5-phosphate-binding residues include serine 155, glutamate 156, serine 180, and histidine 203. Residue glutamate 156 coordinates Mn(2+). Glycine 209 is a binding site for NADPH. 1-deoxy-D-xylulose 5-phosphate contacts are provided by serine 216, asparagine 221, lysine 222, and glutamate 225. Residue glutamate 225 coordinates Mn(2+).

It belongs to the DXR family. Requires Mg(2+) as cofactor. The cofactor is Mn(2+).

It carries out the reaction 2-C-methyl-D-erythritol 4-phosphate + NADP(+) = 1-deoxy-D-xylulose 5-phosphate + NADPH + H(+). It participates in isoprenoid biosynthesis; isopentenyl diphosphate biosynthesis via DXP pathway; isopentenyl diphosphate from 1-deoxy-D-xylulose 5-phosphate: step 1/6. Its function is as follows. Catalyzes the NADPH-dependent rearrangement and reduction of 1-deoxy-D-xylulose-5-phosphate (DXP) to 2-C-methyl-D-erythritol 4-phosphate (MEP). The sequence is that of 1-deoxy-D-xylulose 5-phosphate reductoisomerase from Corynebacterium efficiens (strain DSM 44549 / YS-314 / AJ 12310 / JCM 11189 / NBRC 100395).